The sequence spans 542 residues: uncharacterized protein (542 aa).

The interval K256–E275 is disordered. Positions S258 to T269 are enriched in low complexity.

This is an uncharacterized protein from Caenorhabditis elegans.